Consider the following 122-residue polypeptide: Large ribosomal subunit protein uL14 (122 aa).

The protein belongs to the universal ribosomal protein uL14 family. Part of the 50S ribosomal subunit. Forms a cluster with proteins L3 and L19. In the 70S ribosome, L14 and L19 interact and together make contacts with the 16S rRNA in bridges B5 and B8.

Its function is as follows. Binds to 23S rRNA. Forms part of two intersubunit bridges in the 70S ribosome. This Borrelia turicatae (strain 91E135) protein is Large ribosomal subunit protein uL14.